Reading from the N-terminus, the 239-residue chain is tRNA (guanine-N(7)-)-methyltransferase (239 aa).

The S-adenosyl-L-methionine site is built by Glu-69, Glu-94, Asp-121, and Asp-144. Asp-144 is a catalytic residue. A substrate-binding site is contributed by Lys-148. Positions 150 to 155 (RHNKRR) are interaction with RNA. Residues Asp-180 and 217–220 (TKFE) contribute to the substrate site.

The protein belongs to the class I-like SAM-binding methyltransferase superfamily. TrmB family. As to quaternary structure, monomer.

It catalyses the reaction guanosine(46) in tRNA + S-adenosyl-L-methionine = N(7)-methylguanosine(46) in tRNA + S-adenosyl-L-homocysteine. Its pathway is tRNA modification; N(7)-methylguanine-tRNA biosynthesis. Its function is as follows. Catalyzes the formation of N(7)-methylguanine at position 46 (m7G46) in tRNA. The polypeptide is tRNA (guanine-N(7)-)-methyltransferase (Sodalis glossinidius (strain morsitans)).